Consider the following 167-residue polypeptide: UPF0262 protein Nwi_0248 (167 aa).

The protein belongs to the UPF0262 family.

In Nitrobacter winogradskyi (strain ATCC 25391 / DSM 10237 / CIP 104748 / NCIMB 11846 / Nb-255), this protein is UPF0262 protein Nwi_0248.